The primary structure comprises 180 residues: Probable chorismate pyruvate-lyase (180 aa).

Substrate contacts are provided by Arg-82, Leu-120, and Glu-165.

Belongs to the UbiC family.

Its subcellular location is the cytoplasm. It carries out the reaction chorismate = 4-hydroxybenzoate + pyruvate. The protein operates within cofactor biosynthesis; ubiquinone biosynthesis. Functionally, removes the pyruvyl group from chorismate, with concomitant aromatization of the ring, to provide 4-hydroxybenzoate (4HB) for the ubiquinone pathway. This Aliivibrio fischeri (strain ATCC 700601 / ES114) (Vibrio fischeri) protein is Probable chorismate pyruvate-lyase.